Reading from the N-terminus, the 295-residue chain is Small ribosomal subunit protein uS2 (295 aa).

At serine 2 the chain carries N-acetylserine. Serine 43 is subject to Phosphoserine. Lysine 52 carries the post-translational modification N6-acetyllysine. Residues 54–113 (TWEKLLLAARAIVAIENPADVSVISSRNTGQRAVLKFAAATGATPIAGRFTPGTFTNQIQ) form an interaction with PPP1R16B region. Lysine 89 is modified (N6-acetyllysine; alternate). Residue lysine 89 forms a Glycyl lysine isopeptide (Lys-Gly) (interchain with G-Cter in SUMO2); alternate linkage. Threonine 97 carries the post-translational modification Phosphothreonine. Laminin-binding regions lie at residues 161-180 (IPCN…MLAR) and 205-229 (RDPE…EFQG). 5 [DE]-W-[ST] repeats span residues 230–232 (EWT), 247–249 (DWS), 266–268 (DWS), 275–277 (DWS), and 293–295 (EWS). The segment at 242–295 (QPEVADWSEGVQVPSVPIQQFPTEDWSAQPATEDWSAAPTAQATEWVGATTEWS) is laminin-binding. A disordered region spans residues 266 to 295 (DWSAQPATEDWSAAPTAQATEWVGATTEWS).

The protein belongs to the universal ribosomal protein uS2 family. In terms of assembly, monomer (37LRP) and homodimer (67LR). Component of the small ribosomal subunit. Mature ribosomes consist of a small (40S) and a large (60S) subunit. The 40S subunit contains about 33 different proteins and 1 molecule of RNA (18S). The 60S subunit contains about 49 different proteins and 3 molecules of RNA (28S, 5.8S and 5S). Interacts with RPS21. Interacts with several laminins including at least LAMB1. Interacts with MDK. The mature dimeric form interacts with PPP1R16B (via its fourth ankyrin repeat). Interacts with PPP1CA only in the presence of PPP1R16B. Acylated. Acylation may be a prerequisite for conversion of the monomeric 37 kDa laminin receptor precursor (37LRP) to the mature dimeric 67 kDa laminin receptor (67LR), and may provide a mechanism for membrane association. Post-translationally, cleaved by stromelysin-3 (ST3) at the cell surface. Cleavage by stromelysin-3 may be a mechanism to alter cell-extracellular matrix interactions. Expressed in most neurons and in a subset of glial cells. The overall distribution of LR correlates with that reported for laminin-1 but also with brain regions classically associated with prion-related neurodegeneration.

Its subcellular location is the cell membrane. It localises to the cytoplasm. It is found in the nucleus. In terms of biological role, required for the assembly and/or stability of the 40S ribosomal subunit. Required for the processing of the 20S rRNA-precursor to mature 18S rRNA in a late step of the maturation of 40S ribosomal subunits. Also functions as a cell surface receptor for laminin. Plays a role in cell adhesion to the basement membrane and in the consequent activation of signaling transduction pathways. May play a role in cell fate determination and tissue morphogenesis. Also acts as a receptor for several other ligands, including the pathogenic prion protein, viruses, and bacteria. Acts as a PPP1R16B-dependent substrate of PPP1CA. The polypeptide is Small ribosomal subunit protein uS2 (Rpsa) (Rattus norvegicus (Rat)).